A 263-amino-acid chain; its full sequence is Protein maestro (263 aa).

The tract at residues 1–21 is disordered; sequence MDQTPRRMLGQPLSSPATQPK. One copy of the HEAT repeat lies at 128 to 163; the sequence is SFFIDITLQTRTLLDDENDSLRYSAFVLFGQLADLA.

It is found in the nucleus. Its subcellular location is the nucleolus. In Bos taurus (Bovine), this protein is Protein maestro (MRO).